The sequence spans 199 residues: NAD(P)H dehydrogenase (quinone) 1 (199 aa).

Residues 4–190 (VLVLYYSAYG…EAARFQGAHV (187 aa)) enclose the Flavodoxin-like domain. FMN is bound by residues 10 to 15 (SAYGHI) and 78 to 80 (TRY). Tyr12 lines the NAD(+) pocket. Trp98 contacts substrate. FMN is bound by residues 113 to 119 (SSATQHG) and His134.

It belongs to the WrbA family. The cofactor is FMN.

It catalyses the reaction a quinone + NADH + H(+) = a quinol + NAD(+). The enzyme catalyses a quinone + NADPH + H(+) = a quinol + NADP(+). This chain is NAD(P)H dehydrogenase (quinone) 1, found in Rhizobium meliloti (strain 1021) (Ensifer meliloti).